A 329-amino-acid chain; its full sequence is uncharacterized protein (329 aa).

Positions 1-20 are disordered; sequence MGESTTQPAGGAAVDDETRS.

This is an uncharacterized protein from Mycobacterium tuberculosis (strain CDC 1551 / Oshkosh).